The sequence spans 617 residues: Elongation factor 4 (617 aa).

Positions 17–198 constitute a tr-type G domain; that stretch reads AIIRNFCIIA…KIVRDLPAPV (182 aa). Residues 29–34 and 145–148 contribute to the GTP site; these read DHGKST and NKID.

Belongs to the TRAFAC class translation factor GTPase superfamily. Classic translation factor GTPase family. LepA subfamily.

It is found in the cell membrane. It carries out the reaction GTP + H2O = GDP + phosphate + H(+). Its function is as follows. Required for accurate and efficient protein synthesis under certain stress conditions. May act as a fidelity factor of the translation reaction, by catalyzing a one-codon backward translocation of tRNAs on improperly translocated ribosomes. Back-translocation proceeds from a post-translocation (POST) complex to a pre-translocation (PRE) complex, thus giving elongation factor G a second chance to translocate the tRNAs correctly. Binds to ribosomes in a GTP-dependent manner. The chain is Elongation factor 4 from Paenarthrobacter aurescens (strain TC1).